The sequence spans 373 residues: MSANDRRDRRVRVAVVFGGRSNEHAISCVSAGSILRNLDSRRFDVIAVGITPAGSWVLTDANPDALTITNRELPQVKSGSGTELALPADPRRGGQLVSLPPGAGEVLESVDVVFPVLHGPYGEDGTIQGLLELAGVPYVGAGVLASAVGMDKEFTKKLLAADGLPVGAYAVLRPPRSTLHRQECERLGLPVFVKPARGGSSIGVSRVSSWDQLPAAVARARRHDPKVIVEAAISGRELECGVLEMPDGTLEASTLGEIRVAGVRGREDSFYDFATKYLDDAAELDVPAKVDDQVAEAIRQLAIRAFAAIDCRGLARVDFFLTDDGPVINEINTMPGFTTISMYPRMWAASGVDYPTLLATMIETTLARGVGLH.

An ATP-grasp domain is found at 156 to 363 (KKLLAADGLP…YPTLLATMIE (208 aa)). An ATP-binding site is contributed by 184–239 (CERLGLPVFVKPARGGSSIGVSRVSSWDQLPAAVARARRHDPKVIVEAAISGRELE). The Mg(2+) site is built by D318, E330, and N332.

Belongs to the D-alanine--D-alanine ligase family. It depends on Mg(2+) as a cofactor. Mn(2+) is required as a cofactor.

Its subcellular location is the cytoplasm. The enzyme catalyses 2 D-alanine + ATP = D-alanyl-D-alanine + ADP + phosphate + H(+). The protein operates within cell wall biogenesis; peptidoglycan biosynthesis. Functionally, cell wall formation. The chain is D-alanine--D-alanine ligase from Mycobacterium tuberculosis (strain ATCC 25177 / H37Ra).